We begin with the raw amino-acid sequence, 716 residues long: Ubiquitin thioesterase zranb1-B (716 aa).

2 RanBP2-type zinc fingers span residues 3 to 33 (DLGL…QRHN) and 82 to 111 (TSSK…QRQQ). Zn(2+) is bound by residues C10, C13, C24, C27, C88, C91, C102, and C105. The disordered stretch occupies residues 113-143 (SQQHSPLSPSETPQTSGSRPSPVTSDPCEEY). Positions 118–136 (PLSPSETPQTSGSRPSPVT) are enriched in polar residues. Residues 152 to 181 (HAQRWPCSACTYENWPKSLRCVVCDHPKPS) form a RanBP2-type 3 zinc finger. Zn(2+) contacts are provided by C158, C161, C172, and C175. A disordered region spans residues 178–228 (PKPSGSPETPQQDSEAESATSPSIVNEQERENVRTAGGGGGGSRGRLRKLS). Over residues 183–203 (SPETPQQDSEAESATSPSIVN) the composition is skewed to polar residues. ANK repeat units lie at residues 268–298 (RRSD…SGGD) and 321–348 (FTLV…QQTA). Residues 440–600 (LYALWNRTAG…RGHFSALVAM (161 aa)) form the OTU domain. The Nucleophile role is filled by C451. H593 acts as the Proton acceptor in catalysis.

This sequence belongs to the peptidase C64 family.

Its subcellular location is the cytoplasm. It is found in the nucleus. It catalyses the reaction Thiol-dependent hydrolysis of ester, thioester, amide, peptide and isopeptide bonds formed by the C-terminal Gly of ubiquitin (a 76-residue protein attached to proteins as an intracellular targeting signal).. Its function is as follows. Ubiquitin thioesterase, which specifically hydrolyzes 'Lys-29'-linked and 'Lys-33'-linked diubiquitin. Also cleaves 'Lys-63'-linked chains, but with 40-fold less efficiency compared to 'Lys-29'-linked ones. Positive regulator of the Wnt signaling pathway that deubiquitinates apc protein, a negative regulator of Wnt-mediated transcription. Acts as a regulator of autophagy by mediating deubiquitination of pik3c3/vps34, thereby promoting autophagosome maturation. Plays a role in the regulation of cell morphology and cytoskeletal organization. Required in the stress fiber dynamics and cell migration. The sequence is that of Ubiquitin thioesterase zranb1-B (zranb1b) from Danio rerio (Zebrafish).